A 209-amino-acid polypeptide reads, in one-letter code: Kynurenine formamidase (209 aa).

Tryptophan 20 lines the substrate pocket. Zn(2+) contacts are provided by histidine 50, histidine 54, and aspartate 56. Histidine 60 functions as the Proton donor/acceptor in the catalytic mechanism. Zn(2+) contacts are provided by histidine 161 and glutamate 173.

It belongs to the Cyclase 1 superfamily. KynB family. In terms of assembly, homodimer. Zn(2+) serves as cofactor.

The enzyme catalyses N-formyl-L-kynurenine + H2O = L-kynurenine + formate + H(+). It functions in the pathway amino-acid degradation; L-tryptophan degradation via kynurenine pathway; L-kynurenine from L-tryptophan: step 2/2. In terms of biological role, catalyzes the hydrolysis of N-formyl-L-kynurenine to L-kynurenine, the second step in the kynurenine pathway of tryptophan degradation. This Bacillus cytotoxicus (strain DSM 22905 / CIP 110041 / 391-98 / NVH 391-98) protein is Kynurenine formamidase.